The chain runs to 271 residues: Hydroxyethylthiazole kinase (271 aa).

Substrate is bound at residue Met-50. Arg-126 and Thr-172 together coordinate ATP. Gly-199 provides a ligand contact to substrate.

Belongs to the Thz kinase family. It depends on Mg(2+) as a cofactor.

It catalyses the reaction 5-(2-hydroxyethyl)-4-methylthiazole + ATP = 4-methyl-5-(2-phosphooxyethyl)-thiazole + ADP + H(+). It functions in the pathway cofactor biosynthesis; thiamine diphosphate biosynthesis; 4-methyl-5-(2-phosphoethyl)-thiazole from 5-(2-hydroxyethyl)-4-methylthiazole: step 1/1. In terms of biological role, catalyzes the phosphorylation of the hydroxyl group of 4-methyl-5-beta-hydroxyethylthiazole (THZ). The sequence is that of Hydroxyethylthiazole kinase from Akkermansia muciniphila (strain ATCC BAA-835 / DSM 22959 / JCM 33894 / BCRC 81048 / CCUG 64013 / CIP 107961 / Muc).